Consider the following 216-residue polypeptide: SPbeta prophage-derived uncharacterized protein YomX (216 aa).

This chain is SPbeta prophage-derived uncharacterized protein YomX (yomX), found in Bacillus subtilis (strain 168).